A 1074-amino-acid polypeptide reads, in one-letter code: Zinc finger protein 518B (1074 aa).

Polar residues predominate over residues His12–Pro24. A disordered region spans residues His12 to Asn36. C2H2-type zinc fingers lie at residues Phe162–His184 and Tyr190–His213. Residues Lys482, Lys491, and Lys558 each participate in a glycyl lysine isopeptide (Lys-Gly) (interchain with G-Cter in SUMO2) cross-link. Positions Ser568–Ser590 are disordered. Residues Arg570–Ala582 show a composition bias toward basic and acidic residues. Lys594 participates in a covalent cross-link: Glycyl lysine isopeptide (Lys-Gly) (interchain with G-Cter in SUMO2). Disordered stretches follow at residues Thr603–Val632 and Lys678–Ser704. Residues Gly604–Glu622 are compositionally biased toward basic and acidic residues. Residues Gly693 to Ser704 show a composition bias toward polar residues. Glycyl lysine isopeptide (Lys-Gly) (interchain with G-Cter in SUMO2) cross-links involve residues Lys809, Lys846, and Lys860. The C2H2-type 3 zinc-finger motif lies at Phe1036–His1058.

This sequence belongs to the krueppel C2H2-type zinc-finger protein family.

Its subcellular location is the nucleus. Its function is as follows. Through its association with the EHMT1-EHMT2/G9A and PRC2/EED-EZH2 histone methyltransferase complexes may function in gene silencing, regulating repressive post-translational methylation of histone tails at promoters of target genes. The chain is Zinc finger protein 518B (ZNF518B) from Homo sapiens (Human).